The primary structure comprises 427 residues: Imidazolonepropionase (427 aa).

Residues histidine 78 and histidine 80 each contribute to the Fe(3+) site. Zn(2+) contacts are provided by histidine 78 and histidine 80. The 4-imidazolone-5-propanoate site is built by arginine 87, tyrosine 150, and histidine 183. Residue tyrosine 150 coordinates N-formimidoyl-L-glutamate. Histidine 255 contributes to the Fe(3+) binding site. Zn(2+) is bound at residue histidine 255. Glutamate 258 is a 4-imidazolone-5-propanoate binding site. Aspartate 330 contributes to the Fe(3+) binding site. Aspartate 330 is a binding site for Zn(2+). The N-formimidoyl-L-glutamate site is built by asparagine 332 and glycine 334. 4-imidazolone-5-propanoate is bound at residue threonine 335.

Belongs to the metallo-dependent hydrolases superfamily. HutI family. Zn(2+) is required as a cofactor. Requires Fe(3+) as cofactor.

It is found in the cytoplasm. The catalysed reaction is 4-imidazolone-5-propanoate + H2O = N-formimidoyl-L-glutamate. Its pathway is amino-acid degradation; L-histidine degradation into L-glutamate; N-formimidoyl-L-glutamate from L-histidine: step 3/3. Catalyzes the hydrolytic cleavage of the carbon-nitrogen bond in imidazolone-5-propanoate to yield N-formimidoyl-L-glutamate. It is the third step in the universal histidine degradation pathway. The chain is Imidazolonepropionase from Herpetosiphon aurantiacus (strain ATCC 23779 / DSM 785 / 114-95).